Here is a 963-residue protein sequence, read N- to C-terminus: uncharacterized protein (963 aa).

2 coiled-coil regions span residues 176–236 (NGRN…HIRM) and 373–467 (DYEW…KKTV). Residues 468–488 (IAAGMLFIVLFSLLQQWIPAI) form a helical membrane-spanning segment. Coiled-coil stretches lie at residues 536 to 570 (RNKQ…AEMA) and 647 to 789 (ALHT…LEAS).

The protein resides in the cell membrane. This is an uncharacterized protein from Bacillus subtilis (strain 168).